The chain runs to 142 residues: Low molecular weight protein-tyrosine-phosphatase Ptp (142 aa).

The active-site Nucleophile is the Cys-10. Residue Arg-16 is part of the active site. Residue Asp-115 is the Proton donor of the active site.

The protein belongs to the low molecular weight phosphotyrosine protein phosphatase family.

The catalysed reaction is O-phospho-L-tyrosyl-[protein] + H2O = L-tyrosyl-[protein] + phosphate. Its pathway is glycan metabolism; exopolysaccharide biosynthesis. Its activity is regulated as follows. Inhibited by ammonium molybdate, sodium orthovanadate, N-ethylmaleimide and iodoacetic acid. In terms of biological role, dephosphorylates ptk. May be involved in the production and the transport of exopolysaccharides. This is Low molecular weight protein-tyrosine-phosphatase Ptp (ptp) from Acinetobacter johnsonii.